The sequence spans 303 residues: MRVALLMGGVSREREISLRSGERVKKALEKLGYEYTVFDVKEDFLKEVDQLKSFDVVFNVLHGTFGEDGTLQAILDFLGIRYTGSDAFSSMICFDKLATYRFLKDIVEIPDFIEIREFMETSPLGYPCVVKPRREGSSIGVFICESDEEFQHALKEDLPRYGSVIVQKYIPGREMTVSILETEKGFEVLPILELRPKRRFYDYVAKYTKGETEFILPAPLNPSEERLVKETALKAFVEAGCRGFGRVDGIFSNGRFYFLEINTVPGLTETSDLPASAKAGGIEFEELVEIILKSAFLKGEVRA.

The region spanning 99–293 is the ATP-grasp domain; sequence TYRFLKDIVE…FEELVEIILK (195 aa). 125-176 contributes to the ATP binding site; it reads GYPCVVKPRREGSSIGVFICESDEEFQHALKEDLPRYGSVIVQKYIPGREMT. 3 residues coordinate Mg(2+): D248, E260, and N262.

The protein belongs to the D-alanine--D-alanine ligase family. Mg(2+) serves as cofactor. The cofactor is Mn(2+).

It is found in the cytoplasm. The enzyme catalyses 2 D-alanine + ATP = D-alanyl-D-alanine + ADP + phosphate + H(+). The protein operates within cell wall biogenesis; peptidoglycan biosynthesis. Functionally, cell wall formation. The protein is D-alanine--D-alanine ligase of Thermotoga petrophila (strain ATCC BAA-488 / DSM 13995 / JCM 10881 / RKU-1).